Reading from the N-terminus, the 328-residue chain is Nickel import system permease protein NikB (328 aa).

6 helical membrane-spanning segments follow: residues 11–31 (LMQMIVVLFVISTLTFILMKL), 104–124 (LLISFSTLVVSLCISIPLGII), 139–159 (VISTLSISLPAFFIGIILLFI), 170–190 (ILSQFILPVITLSLGMCAYII), 229–249 (ILPIIPLLGISLGSLIGGTVV), and 279–299 (VLFIGFFVVIINTIADLLTLL). Residues 100-297 (APITLLISFS…IINTIADLLT (198 aa)) enclose the ABC transmembrane type-1 domain.

The protein belongs to the binding-protein-dependent transport system permease family. OppBC subfamily. The complex is composed of two ATP-binding proteins (NikD and NikE), two transmembrane proteins (NikB and NikC) and a solute-binding protein (NikA).

Its subcellular location is the cell membrane. Its function is as follows. Part of the ABC transporter complex NikABCDE (Opp2) involved in nickel import. Probably responsible for the translocation of the substrate across the membrane. This Staphylococcus aureus (strain USA300) protein is Nickel import system permease protein NikB.